Here is an 83-residue protein sequence, read N- to C-terminus: Cytochrome b559 subunit alpha (83 aa).

A helical transmembrane segment spans residues 21–35 (VIHSITIPSLFIAGW). Histidine 23 serves as a coordination point for heme.

It belongs to the PsbE/PsbF family. As to quaternary structure, heterodimer of an alpha subunit and a beta subunit. PSII is composed of 1 copy each of membrane proteins PsbA, PsbB, PsbC, PsbD, PsbE, PsbF, PsbH, PsbI, PsbJ, PsbK, PsbL, PsbM, PsbT, PsbX, PsbY, PsbZ, Psb30/Ycf12, at least 3 peripheral proteins of the oxygen-evolving complex and a large number of cofactors. It forms dimeric complexes. It depends on heme b as a cofactor.

Its subcellular location is the plastid. The protein resides in the chloroplast thylakoid membrane. Functionally, this b-type cytochrome is tightly associated with the reaction center of photosystem II (PSII). PSII is a light-driven water:plastoquinone oxidoreductase that uses light energy to abstract electrons from H(2)O, generating O(2) and a proton gradient subsequently used for ATP formation. It consists of a core antenna complex that captures photons, and an electron transfer chain that converts photonic excitation into a charge separation. The chain is Cytochrome b559 subunit alpha from Huperzia lucidula (Shining clubmoss).